Reading from the N-terminus, the 223-residue chain is MTQDELKQAVAKAAMAYIQPMLEADTIVGVGTGSTANLFIDELAKHKGLFDGTVASSEASAERLKKHGIPVYDLNSVDSIRVYVDGADESNDNLHLIKGGGAALTREKIVAACSDEFVCIADESKLVKVLGDFPLPVEIIPMARGHVARELVKLGGDPVYREGVVTDNGNHILDVYNLEILDPIALEKSIDGIVGVVTNGLFAKRSADVLLLATKEGIKTLKK.

Residues 32–35, 85–88, and 98–101 contribute to the substrate site; these read TGST, DGAD, and KGGG. The active-site Proton acceptor is E107. Substrate is bound at residue K125.

Belongs to the ribose 5-phosphate isomerase family. In terms of assembly, homodimer.

The catalysed reaction is aldehydo-D-ribose 5-phosphate = D-ribulose 5-phosphate. The protein operates within carbohydrate degradation; pentose phosphate pathway; D-ribose 5-phosphate from D-ribulose 5-phosphate (non-oxidative stage): step 1/1. In terms of biological role, catalyzes the reversible conversion of ribose-5-phosphate to ribulose 5-phosphate. The sequence is that of Ribose-5-phosphate isomerase A from Marinomonas sp. (strain MWYL1).